Consider the following 228-residue polypeptide: UPF0173 metal-dependent hydrolase lmo1577 (228 aa).

It belongs to the UPF0173 family.

This is UPF0173 metal-dependent hydrolase lmo1577 from Listeria monocytogenes serovar 1/2a (strain ATCC BAA-679 / EGD-e).